Here is a 414-residue protein sequence, read N- to C-terminus: Probable indole-3-pyruvate monooxygenase YUCCA1 (414 aa).

25-30 (GAGPSG) lines the FAD pocket. 189-194 (GCGNSG) is an NADP(+) binding site.

It belongs to the FMO family. FAD serves as cofactor. Expressed in the apical meristems and young floral primordia. Detected in the floral meristems and at the base of the floral organs.

The enzyme catalyses indole-3-pyruvate + NADPH + O2 + H(+) = (indol-3-yl)acetate + CO2 + NADP(+) + H2O. Its pathway is plant hormone metabolism; auxin biosynthesis. Involved in auxin biosynthesis, but not in the tryptamine or the CYP79B2/B3 branches. Catalyzes in vitro the N-oxidation of tryptamine to form N-hydroxyl tryptamine. Involved during embryogenesis and seedling development. Required for the formation of floral organs and vascular tissues. Belongs to the set of redundant YUCCA genes probably responsible for auxin biosynthesis in shoots. This chain is Probable indole-3-pyruvate monooxygenase YUCCA1 (YUC1), found in Arabidopsis thaliana (Mouse-ear cress).